The following is a 244-amino-acid chain: Ubiquinone/menaquinone biosynthesis C-methyltransferase UbiE (244 aa).

S-adenosyl-L-methionine is bound by residues threonine 70, aspartate 91, and 117–118; that span reads DA.

This sequence belongs to the class I-like SAM-binding methyltransferase superfamily. MenG/UbiE family.

The catalysed reaction is a 2-demethylmenaquinol + S-adenosyl-L-methionine = a menaquinol + S-adenosyl-L-homocysteine + H(+). The enzyme catalyses a 2-methoxy-6-(all-trans-polyprenyl)benzene-1,4-diol + S-adenosyl-L-methionine = a 5-methoxy-2-methyl-3-(all-trans-polyprenyl)benzene-1,4-diol + S-adenosyl-L-homocysteine + H(+). The protein operates within quinol/quinone metabolism; menaquinone biosynthesis; menaquinol from 1,4-dihydroxy-2-naphthoate: step 2/2. It participates in cofactor biosynthesis; ubiquinone biosynthesis. Functionally, methyltransferase required for the conversion of demethylmenaquinol (DMKH2) to menaquinol (MKH2) and the conversion of 2-polyprenyl-6-methoxy-1,4-benzoquinol (DDMQH2) to 2-polyprenyl-3-methyl-6-methoxy-1,4-benzoquinol (DMQH2). In Laribacter hongkongensis (strain HLHK9), this protein is Ubiquinone/menaquinone biosynthesis C-methyltransferase UbiE.